An 88-amino-acid polypeptide reads, in one-letter code: Small ribosomal subunit protein bS20 (88 aa).

Positions 1–20 (MANTAQARKRARQAVVQNAH) are disordered.

The protein belongs to the bacterial ribosomal protein bS20 family.

Binds directly to 16S ribosomal RNA. The polypeptide is Small ribosomal subunit protein bS20 (Ralstonia nicotianae (strain ATCC BAA-1114 / GMI1000) (Ralstonia solanacearum)).